Reading from the N-terminus, the 97-residue chain is MFTFDLQLFAHKKGVGSSKNGRDSQSKRLGVKRYDGQIVTAGNILVRQRGTKIHPGQNVMIGGDDTLFAIIDGRVKFERKGRDKKQVSVYPLETMTM.

A propeptide spanning residues 1–9 is cleaved from the precursor; it reads MFTFDLQLF.

Belongs to the bacterial ribosomal protein bL27 family. The N-terminus is cleaved by ribosomal processing cysteine protease Prp.

This Syntrophomonas wolfei subsp. wolfei (strain DSM 2245B / Goettingen) protein is Large ribosomal subunit protein bL27.